We begin with the raw amino-acid sequence, 176 residues long: Probable DNA-directed RNA polymerase subunit delta (176 aa).

The HTH HARE-type domain occupies 14-81 (LSLIDVAHFI…GNNMWGLRAW (68 aa)). Disordered regions lie at residues 91–119 (VQTQTTPKKKRKSDDDDDEEILDDDVDYD) and 140–176 (DEDEDEDDHLPDGIEGDLATVEDDYTDGDYTEDPEDK). Composition is skewed to acidic residues over residues 105–119 (DDDDEEILDDDVDYD) and 159–176 (TVEDDYTDGDYTEDPEDK).

Belongs to the RpoE family. In terms of assembly, RNAP is composed of a core of 2 alpha, a beta and a beta' subunits. The core is associated with a delta subunit and one of several sigma factors.

Functionally, participates in both the initiation and recycling phases of transcription. In the presence of the delta subunit, RNAP displays an increased specificity of transcription, a decreased affinity for nucleic acids, and an increased efficiency of RNA synthesis because of enhanced recycling. This is Probable DNA-directed RNA polymerase subunit delta from Listeria welshimeri serovar 6b (strain ATCC 35897 / DSM 20650 / CCUG 15529 / CIP 8149 / NCTC 11857 / SLCC 5334 / V8).